Consider the following 420-residue polypeptide: Reticulon-4 receptor-like 2 (420 aa).

An N-terminal signal peptide occupies residues 1-30 (MLPGLRRLLQGPASACLLLTLLALPSVTPS). 2 disulfide bridges follow: cysteine 31/cysteine 37 and cysteine 35/cysteine 46. One can recognise an LRRNT domain in the interval 31 to 60 (CPMLCTCYSSPPTVSCQANNFSSVPLSLPP). The N-linked (GlcNAc...) asparagine glycan is linked to asparagine 50. LRR repeat units lie at residues 61-82 (STQRLFLQNNLIRSLRPGTFGP), 83-104 (NLLTLWLFSNNLSTIHPGTFRH), 107-129 (ALEELDLGDNRHLRSLEPDTFQG), 132-153 (RLQSLHLYRCQLSSLPGNIFRG), 156-177 (SLQYLYLQENSLLHLQDDLFAD), 180-201 (NLSHLFLHGNRLRLLTEHVFRG), 204-225 (SLDRLLLHGNRLQGVHRAAFHG), and 228-249 (RLTILYLFNNSLASLPGEALAD). N-linked (GlcNAc...) asparagine glycosylation is present at asparagine 93. An N-linked (GlcNAc...) asparagine glycan is attached at asparagine 236. Positions 261-312 (NPWACDCRARPLWAWFQRARVSSSDVTCATPPERQGRDLRALRDSDFQACPP) constitute an LRRCT domain. 2 cysteine pairs are disulfide-bonded: cysteine 265–cysteine 288 and cysteine 267–cysteine 310. The tract at residues 286–399 (VTCATPPERQ…CQAPADSRGP (114 aa)) is disordered. The span at 294-306 (RQGRDLRALRDSD) shows a compositional bias: basic and acidic residues. The important for interaction with MAG stretch occupies residues 315 to 327 (PTRPGSRARGNSS). Residues 351 to 360 (LPAEDSRGRQ) show a composition bias toward basic and acidic residues. Glycine 398 is lipidated: GPI-anchor amidated glycine. Positions 399 to 420 (PALSAGLRTPLLCLLPLALHHL) are cleaved as a propeptide — removed in mature form.

The protein belongs to the Nogo receptor family. As to quaternary structure, interaction with MAG is controversial, and may be indirect. Interacts with MAG. Does not interact with OMG and RTN4. Undergoes zinc metalloproteinase-mediated ectodomain shedding in neuroblastoma cells; is released both as a full-length ectodomain and an N-terminal fragment containing the leucine-rich repeat (LRR) region of the protein. Post-translationally, N-glycosylated. As to expression, detected in brain. Detected in hippocampus neurons (at protein level).

The protein resides in the cell membrane. The protein localises to the membrane raft. Its subcellular location is the cell projection. It localises to the dendrite. It is found in the axon. The protein resides in the perikaryon. Functionally, cell surface receptor that plays a functionally redundant role in the inhibition of neurite outgrowth mediated by MAG. Plays a functionally redundant role in postnatal brain development. Contributes to normal axon migration across the brain midline and normal formation of the corpus callosum. Does not seem to play a significant role in regulating axon regeneration in the adult central nervous system. Protects motoneurons against apoptosis; protection against apoptosis is probably mediated by MAG. Like other family members, plays a role in restricting the number dendritic spines and the number of synapses that are formed during brain development. Signaling mediates activation of Rho and downstream reorganization of the actin cytoskeleton. This Mus musculus (Mouse) protein is Reticulon-4 receptor-like 2.